The chain runs to 542 residues: CTP synthase (542 aa).

The interval Met1 to Leu266 is amidoligase domain. A CTP-binding site is contributed by Ser14. Ser14 provides a ligand contact to UTP. ATP-binding positions include Ser15–Ile20 and Asp72. The Mg(2+) site is built by Asp72 and Glu140. CTP-binding positions include Asp147–Glu149, Lys187–Gln192, and Lys223. Residues Lys187 to Gln192 and Lys223 each bind UTP. Lys239–Val241 lines the ATP pocket. The region spanning Thr291–Lys542 is the Glutamine amidotransferase type-1 domain. Residue Gly352 coordinates L-glutamine. Cys379 functions as the Nucleophile; for glutamine hydrolysis in the catalytic mechanism. L-glutamine is bound by residues Leu380–Gln383, Glu403, and Arg470. Catalysis depends on residues His515 and Glu517.

The protein belongs to the CTP synthase family. As to quaternary structure, homotetramer.

It carries out the reaction UTP + L-glutamine + ATP + H2O = CTP + L-glutamate + ADP + phosphate + 2 H(+). The catalysed reaction is L-glutamine + H2O = L-glutamate + NH4(+). The enzyme catalyses UTP + NH4(+) + ATP = CTP + ADP + phosphate + 2 H(+). It functions in the pathway pyrimidine metabolism; CTP biosynthesis via de novo pathway; CTP from UDP: step 2/2. Allosterically activated by GTP, when glutamine is the substrate; GTP has no effect on the reaction when ammonia is the substrate. The allosteric effector GTP functions by stabilizing the protein conformation that binds the tetrahedral intermediate(s) formed during glutamine hydrolysis. Inhibited by the product CTP, via allosteric rather than competitive inhibition. Catalyzes the ATP-dependent amination of UTP to CTP with either L-glutamine or ammonia as the source of nitrogen. Regulates intracellular CTP levels through interactions with the four ribonucleotide triphosphates. The sequence is that of CTP synthase from Actinobacillus succinogenes (strain ATCC 55618 / DSM 22257 / CCUG 43843 / 130Z).